The following is a 919-amino-acid chain: uncharacterized protein (919 aa).

The span at 1 to 15 shows a compositional bias: low complexity; sequence MEALILLSSQQSGSI. Disordered stretches follow at residues 1–167, 179–312, 415–491, 553–739, 751–863, and 883–906; these read MEAL…DLEN, RFKP…STPS, HIYE…RLSL, QQQQ…TIKP, THNE…NNII, and LNIN…DHIN. Residues 16–25 are compositionally biased toward polar residues; the sequence is KNNCASTSDI. 3 stretches are compositionally biased toward low complexity: residues 34–75, 96–107, and 141–153; these read IVIV…SSSS, SSPSSSPNTPKT, and TPTT…TPIK. The segment covering 154–167 has biased composition (basic and acidic residues); sequence PVKDPKEKEKDLEN. Over residues 186 to 292 the composition is skewed to low complexity; it reads NNTNNNNNIN…QQSSPTSSQT (107 aa). Polar residues predominate over residues 420-433; the sequence is PNENNNGGSFQKPN. 4 stretches are compositionally biased toward low complexity: residues 450-471, 553-564, 573-589, and 618-635; these read GVSG…PSHP, QQQQQQQQQSSS, SQPQ…QTPQ, and HMPQ…MPHS. Positions 678–695 are enriched in polar residues; that stretch reads YGSSPNLNGGKGSNNFLQ. The segment covering 712-723 has biased composition (low complexity); the sequence is SSVDSYSNSSPT. The span at 754 to 768 shows a compositional bias: polar residues; that stretch reads ENYMSSPRQPLSPHN. Positions 785–797 are enriched in basic and acidic residues; sequence PHEHCNYIDKNDE. Low complexity predominate over residues 798–863; the sequence is YYSNNNNNNN…NNNNNNNNII (66 aa). The span at 883–899 shows a compositional bias: polar residues; sequence LNINHQDGPNSASSTPR.

This is an uncharacterized protein from Dictyostelium discoideum (Social amoeba).